The sequence spans 345 residues: Dense granule protein 4 (345 aa).

The N-terminal stretch at 1–20 (MQGTWFSLFVVVMVSHLACG) is a signal peptide. A compositionally biased stretch (polar residues) spans 227-251 (SVSVSTEDSGLTGVKDSSSSESTVT). Positions 227–271 (SVSVSTEDSGLTGVKDSSSSESTVTPADEAASESEEGDKTSRKSK) are disordered. The helical transmembrane segment at 276–296 (ILTGLGVAATLAAAAAAAKAV) threads the bilayer. Residues 298-345 (GFGGTRTSTAPAEAGKTELDDGYRPPPFNPRPSPYAELLKDLERMRKE) are disordered. Residues 321–330 (RPPPFNPRPS) are compositionally biased toward pro residues. The span at 335–345 (LLKDLERMRKE) shows a compositional bias: basic and acidic residues.

Post-translationally, O-glycosylated.

The protein localises to the secreted. Its subcellular location is the parasitophorous vacuole lumen. It is found in the parasitophorous vacuole membrane. The protein resides in the cytoplasmic vesicle. It localises to the secretory vesicle. Functionally, major granular component involved in excreted-secreted antigen (ESA) immunity. The protein is Dense granule protein 4 (GRA4) of Toxoplasma gondii.